The following is a 257-amino-acid chain: Pimeloyl-[acyl-carrier protein] methyl ester esterase (257 aa).

The AB hydrolase-1 domain occupies 16-240; the sequence is LVLIHGWGMN…EQASHAPFIS (225 aa). Substrate-binding positions include W22, 82 to 83, and 143 to 147; these read SL and FMALQ. The active-site Nucleophile is S82. Active-site residues include D207 and H235. Substrate is bound at residue H235.

Belongs to the AB hydrolase superfamily. Carboxylesterase BioH family. Monomer.

Its subcellular location is the cytoplasm. It catalyses the reaction 6-carboxyhexanoyl-[ACP] methyl ester + H2O = 6-carboxyhexanoyl-[ACP] + methanol + H(+). It functions in the pathway cofactor biosynthesis; biotin biosynthesis. In terms of biological role, the physiological role of BioH is to remove the methyl group introduced by BioC when the pimeloyl moiety is complete. It allows to synthesize pimeloyl-ACP via the fatty acid synthetic pathway through the hydrolysis of the ester bonds of pimeloyl-ACP esters. In Aliivibrio fischeri (strain ATCC 700601 / ES114) (Vibrio fischeri), this protein is Pimeloyl-[acyl-carrier protein] methyl ester esterase.